A 485-amino-acid polypeptide reads, in one-letter code: Aerolysin-5 (485 aa).

An N-terminal signal peptide occupies residues 1–23 (MQKLKITGLSLIISGLLMAQRHA). Disulfide bonds link Cys-42–Cys-98 and Cys-182–Cys-187. The segment at 68 to 84 (WQISGLANGWVIMGPVY) is interaction with host N-linked glycan. Positions 256–288 (YGLSEKVTTKNKFKWPLVGETELSIEIAANQSW) are part of the transmembrane beta-barrel after proteolytic activation of the toxin and insertion into the host membrane. An interaction with glycans from host GPI-anchor region spans residues 346 to 355 (RWGGNAWYTH). Residues 446 to 485 (AADGKAPRALSARRGEQGLRLAIPLECRKSSPGLASATSA) constitute a propeptide that is removed on maturation.

This sequence belongs to the aerolysin family. In terms of assembly, homodimer in solution; homoheptamer in the host membrane. After binding to GPI-anchored proteins in target membranes and proteolytic removal of the C-terminal propeptide, the protein assembles into a heptameric pre-pore complex. A further conformation change leads to insertion into the host membrane. Post-translationally, proteolytic cleavage and subsequent release of the propeptide trigger a major conformation change, leading to the formation of a heptameric pre-pore that then inserts into the host membrane.

The protein resides in the secreted. Its subcellular location is the host cell membrane. Its function is as follows. Secreted, cytolytic toxin that forms pores in host membranes after proteolytic removal of a C-terminal propeptide, leading to destruction of the membrane permeability barrier and cell death. The pores are formed by transmembrane beta-strands and are approximately 3 nm in diameter. This chain is Aerolysin-5 (ahh5), found in Aeromonas hydrophila.